The sequence spans 436 residues: 3-phosphoshikimate 1-carboxyvinyltransferase (436 aa).

3-phosphoshikimate is bound by residues Lys-23, Ser-24, and Arg-28. Lys-23 is a binding site for phosphoenolpyruvate. Phosphoenolpyruvate-binding residues include Gly-97 and Arg-126. 3-phosphoshikimate is bound by residues Ser-171, Gln-173, Asp-323, and Lys-350. Residue Gln-173 coordinates phosphoenolpyruvate. Residue Asp-323 is the Proton acceptor of the active site. 2 residues coordinate phosphoenolpyruvate: Arg-354 and Arg-396.

This sequence belongs to the EPSP synthase family. In terms of assembly, monomer.

The protein resides in the cytoplasm. It carries out the reaction 3-phosphoshikimate + phosphoenolpyruvate = 5-O-(1-carboxyvinyl)-3-phosphoshikimate + phosphate. It functions in the pathway metabolic intermediate biosynthesis; chorismate biosynthesis; chorismate from D-erythrose 4-phosphate and phosphoenolpyruvate: step 6/7. In terms of biological role, catalyzes the transfer of the enolpyruvyl moiety of phosphoenolpyruvate (PEP) to the 5-hydroxyl of shikimate-3-phosphate (S3P) to produce enolpyruvyl shikimate-3-phosphate and inorganic phosphate. The polypeptide is 3-phosphoshikimate 1-carboxyvinyltransferase (Prochlorococcus marinus (strain AS9601)).